Reading from the N-terminus, the 477-residue chain is Small ribosomal subunit protein uS5m (477 aa).

Belongs to the universal ribosomal protein uS5 family. Component of the mitochondrial small ribosomal subunit (mt-SSU). Mature N.crassa 74S mitochondrial ribosomes consist of a small (37S) and a large (54S) subunit. The 37S small subunit contains a 16S ribosomal RNA (16S mt-rRNA) and 32 different proteins. The 54S large subunit contains a 23S rRNA (23S mt-rRNA) and 42 different proteins. uS3m, uS4m and uS5m form the narrow entry site of the mRNA channel.

It is found in the mitochondrion. Component of the mitochondrial ribosome (mitoribosome), a dedicated translation machinery responsible for the synthesis of mitochondrial genome-encoded proteins, including at least some of the essential transmembrane subunits of the mitochondrial respiratory chain. The mitoribosomes are attached to the mitochondrial inner membrane and translation products are cotranslationally integrated into the membrane. The chain is Small ribosomal subunit protein uS5m (mrps5) from Neurospora crassa (strain ATCC 24698 / 74-OR23-1A / CBS 708.71 / DSM 1257 / FGSC 987).